The sequence spans 439 residues: Serine--tRNA ligase (439 aa).

237–239 (TAE) contacts L-serine. 268 to 270 (RAE) lines the ATP pocket. Glutamate 291 lines the L-serine pocket. 362 to 365 (EISS) contributes to the ATP binding site. Serine 397 is a binding site for L-serine.

It belongs to the class-II aminoacyl-tRNA synthetase family. Type-1 seryl-tRNA synthetase subfamily. As to quaternary structure, homodimer. The tRNA molecule binds across the dimer.

It is found in the cytoplasm. The enzyme catalyses tRNA(Ser) + L-serine + ATP = L-seryl-tRNA(Ser) + AMP + diphosphate + H(+). The catalysed reaction is tRNA(Sec) + L-serine + ATP = L-seryl-tRNA(Sec) + AMP + diphosphate + H(+). The protein operates within aminoacyl-tRNA biosynthesis; selenocysteinyl-tRNA(Sec) biosynthesis; L-seryl-tRNA(Sec) from L-serine and tRNA(Sec): step 1/1. Catalyzes the attachment of serine to tRNA(Ser). Is also able to aminoacylate tRNA(Sec) with serine, to form the misacylated tRNA L-seryl-tRNA(Sec), which will be further converted into selenocysteinyl-tRNA(Sec). The sequence is that of Serine--tRNA ligase from Afipia carboxidovorans (strain ATCC 49405 / DSM 1227 / KCTC 32145 / OM5) (Oligotropha carboxidovorans).